Here is a 229-residue protein sequence, read N- to C-terminus: GTP-binding protein Di-Ras3 (229 aa).

GTP is bound by residues 44–51, 63–69, 91–95, 152–155, and 182–183; these read GTAGVGKS, RHEYLPT, DSKSG, NKSD, and AK. Residues 66-74 carry the Effector region motif; it reads YLPTIENTY. At Cys226 the chain carries Cysteine methyl ester. Cys226 carries the S-geranylgeranyl cysteine lipid modification. Positions 227 to 229 are cleaved as a propeptide — removed in mature form; that stretch reads IIM.

The protein belongs to the small GTPase superfamily. Di-Ras family. Expressed in normal ovarian and breast epithelial cells but not in ovarian and breast cancers.

The protein resides in the cell membrane. This is GTP-binding protein Di-Ras3 (DIRAS3) from Homo sapiens (Human).